Reading from the N-terminus, the 348-residue chain is Protein pelota homolog (348 aa).

It belongs to the eukaryotic release factor 1 family. Pelota subfamily. Monomer. A divalent metal cation serves as cofactor.

The protein resides in the cytoplasm. In terms of biological role, may function in recognizing stalled ribosomes, interact with stem-loop structures in stalled mRNA molecules, and effect endonucleolytic cleavage of the mRNA. May play a role in the release non-functional ribosomes and degradation of damaged mRNAs. Has endoribonuclease activity. This chain is Protein pelota homolog, found in Methanococcus maripaludis (strain C5 / ATCC BAA-1333).